The chain runs to 139 residues: Probable transcription termination protein NusA (139 aa).

In terms of domain architecture, KH spans 97–139 (STVAYAEVDRADTGVAIGRDGETIETARRLAERQFDIDDIELA).

Belongs to the NusA family.

The protein localises to the cytoplasm. Functionally, participates in transcription termination. In Halococcus morrhuae (Micrococcus morrhuae), this protein is Probable transcription termination protein NusA.